Consider the following 92-residue polypeptide: Regakine-1 (92 aa).

The first 21 residues, 1–21 (MRVSLAALAFLLTLAVLHSEA), serve as a signal peptide directing secretion. 2 cysteine pairs are disulfide-bonded: Cys32–Cys56 and Cys33–Cys72.

It belongs to the intercrine beta (chemokine CC) family. In terms of tissue distribution, plasma serum.

Its subcellular location is the secreted. Chemotactic activity for neutrophils and lymphocytes. Binds to heparin. In Bos taurus (Bovine), this protein is Regakine-1.